Here is a 97-residue protein sequence, read N- to C-terminus: Aspartyl/glutamyl-tRNA(Asn/Gln) amidotransferase subunit C (97 aa).

It belongs to the GatC family. As to quaternary structure, heterotrimer of A, B and C subunits.

The enzyme catalyses L-glutamyl-tRNA(Gln) + L-glutamine + ATP + H2O = L-glutaminyl-tRNA(Gln) + L-glutamate + ADP + phosphate + H(+). It catalyses the reaction L-aspartyl-tRNA(Asn) + L-glutamine + ATP + H2O = L-asparaginyl-tRNA(Asn) + L-glutamate + ADP + phosphate + 2 H(+). Allows the formation of correctly charged Asn-tRNA(Asn) or Gln-tRNA(Gln) through the transamidation of misacylated Asp-tRNA(Asn) or Glu-tRNA(Gln) in organisms which lack either or both of asparaginyl-tRNA or glutaminyl-tRNA synthetases. The reaction takes place in the presence of glutamine and ATP through an activated phospho-Asp-tRNA(Asn) or phospho-Glu-tRNA(Gln). This chain is Aspartyl/glutamyl-tRNA(Asn/Gln) amidotransferase subunit C, found in Synechococcus sp. (strain CC9311).